Consider the following 562-residue polypeptide: MRSDMIKKGDHQAPARSLLHATGALKNPTDMNKPFVAICNSYIDIVPGHVHLRELADIAKEAIREAGAIPFEFNTIGVDDGIAMGHIGMRYSLPSREIIADAAETVINAHWFDGVFYIPNCDKITPGMLLAAVRTNVPAIFCSGGPMKAGLSAQGKALTLSSMFEAVGAFKEGKLSKEAFLDMEQNACPTCGSCAGMFTANSMNCLMEVLGLALPYNGTALAVSEQRREMIREAAFKLVDNIKKDIKPLDIVTREAIDDAFALDMAMGGSTNTVLHTLAIANEAGIDYDLERINEIAKKTPYLSKIAPSSSYSMHDVHEAGGCPAIINELMKKEGTLHPDRLTVTGKTLRENNEGKEIKNFDVIHSLDDPYDKQGGLSILFGNIAPKGAVIKVGGVDPSIKIFTGKAICFNSHDEAVEAIDNKIVREGHVVVIRYEGPKGGPGMPEMLAPTSSIVGRGLGKDVALITDGRFSGATRGIAVGHISPEAASGGPIGLIKDGDEVTIDLINRTLNVNQTKEELNHRKEALQPFKAKVKSGYLARYTALVTSANTGGIMQVPENLI.

Residue aspartate 80 participates in Mg(2+) binding. [2Fe-2S] cluster is bound at residue cysteine 121. Residues aspartate 122 and lysine 123 each contribute to the Mg(2+) site. Lysine 123 carries the N6-carboxylysine modification. [2Fe-2S] cluster is bound at residue cysteine 194. Glutamate 446 lines the Mg(2+) pocket. Serine 472 acts as the Proton acceptor in catalysis.

The protein belongs to the IlvD/Edd family. As to quaternary structure, homodimer. [2Fe-2S] cluster is required as a cofactor. Requires Mg(2+) as cofactor.

It catalyses the reaction (2R)-2,3-dihydroxy-3-methylbutanoate = 3-methyl-2-oxobutanoate + H2O. It carries out the reaction (2R,3R)-2,3-dihydroxy-3-methylpentanoate = (S)-3-methyl-2-oxopentanoate + H2O. Its pathway is amino-acid biosynthesis; L-isoleucine biosynthesis; L-isoleucine from 2-oxobutanoate: step 3/4. The protein operates within amino-acid biosynthesis; L-valine biosynthesis; L-valine from pyruvate: step 3/4. Functions in the biosynthesis of branched-chain amino acids. Catalyzes the dehydration of (2R,3R)-2,3-dihydroxy-3-methylpentanoate (2,3-dihydroxy-3-methylvalerate) into 2-oxo-3-methylpentanoate (2-oxo-3-methylvalerate) and of (2R)-2,3-dihydroxy-3-methylbutanoate (2,3-dihydroxyisovalerate) into 2-oxo-3-methylbutanoate (2-oxoisovalerate), the penultimate precursor to L-isoleucine and L-valine, respectively. The sequence is that of Dihydroxy-acid dehydratase from Staphylococcus haemolyticus (strain JCSC1435).